Reading from the N-terminus, the 477-residue chain is Pyruvate kinase (477 aa).

Arg-34 provides a ligand contact to substrate. K(+) is bound by residues Asn-36, Asp-64, and Thr-65. Residue 36–39 (NTAH) participates in ATP binding. ATP contacts are provided by Arg-71 and Lys-150. Residue Glu-216 participates in Mg(2+) binding. Positions 239, 240, and 272 each coordinate substrate. Asp-240 provides a ligand contact to Mg(2+).

The protein belongs to the pyruvate kinase family. Homotetramer. Mg(2+) is required as a cofactor. Requires K(+) as cofactor.

It catalyses the reaction pyruvate + ATP = phosphoenolpyruvate + ADP + H(+). It functions in the pathway carbohydrate degradation; glycolysis; pyruvate from D-glyceraldehyde 3-phosphate: step 5/5. The chain is Pyruvate kinase (pyk) from Borreliella burgdorferi (strain ATCC 35210 / DSM 4680 / CIP 102532 / B31) (Borrelia burgdorferi).